Consider the following 89-residue polypeptide: Small ribosomal subunit protein uS15 (89 aa).

The protein belongs to the universal ribosomal protein uS15 family. In terms of assembly, part of the 30S ribosomal subunit. Forms a bridge to the 50S subunit in the 70S ribosome, contacting the 23S rRNA.

Functionally, one of the primary rRNA binding proteins, it binds directly to 16S rRNA where it helps nucleate assembly of the platform of the 30S subunit by binding and bridging several RNA helices of the 16S rRNA. Its function is as follows. Forms an intersubunit bridge (bridge B4) with the 23S rRNA of the 50S subunit in the ribosome. The polypeptide is Small ribosomal subunit protein uS15 (Synechococcus elongatus (strain ATCC 33912 / PCC 7942 / FACHB-805) (Anacystis nidulans R2)).